A 684-amino-acid chain; its full sequence is Glycine--tRNA ligase beta subunit (684 aa).

It belongs to the class-II aminoacyl-tRNA synthetase family. In terms of assembly, tetramer of two alpha and two beta subunits.

The protein resides in the cytoplasm. The enzyme catalyses tRNA(Gly) + glycine + ATP = glycyl-tRNA(Gly) + AMP + diphosphate. The chain is Glycine--tRNA ligase beta subunit from Pseudomonas syringae pv. tomato (strain ATCC BAA-871 / DC3000).